Here is a 363-residue protein sequence, read N- to C-terminus: Phosphoribosylformylglycinamidine cyclo-ligase (363 aa).

It belongs to the AIR synthase family.

It is found in the cytoplasm. It carries out the reaction 2-formamido-N(1)-(5-O-phospho-beta-D-ribosyl)acetamidine + ATP = 5-amino-1-(5-phospho-beta-D-ribosyl)imidazole + ADP + phosphate + H(+). Its pathway is purine metabolism; IMP biosynthesis via de novo pathway; 5-amino-1-(5-phospho-D-ribosyl)imidazole from N(2)-formyl-N(1)-(5-phospho-D-ribosyl)glycinamide: step 2/2. The polypeptide is Phosphoribosylformylglycinamidine cyclo-ligase (Brucella anthropi (strain ATCC 49188 / DSM 6882 / CCUG 24695 / JCM 21032 / LMG 3331 / NBRC 15819 / NCTC 12168 / Alc 37) (Ochrobactrum anthropi)).